A 102-amino-acid polypeptide reads, in one-letter code: Large ribosomal subunit protein bL21 (102 aa).

Belongs to the bacterial ribosomal protein bL21 family. In terms of assembly, part of the 50S ribosomal subunit. Contacts protein L20.

This protein binds to 23S rRNA in the presence of protein L20. The protein is Large ribosomal subunit protein bL21 of Nitratidesulfovibrio vulgaris (strain ATCC 29579 / DSM 644 / CCUG 34227 / NCIMB 8303 / VKM B-1760 / Hildenborough) (Desulfovibrio vulgaris).